The following is a 239-amino-acid chain: Small ribosomal subunit protein uS2 (239 aa).

This sequence belongs to the universal ribosomal protein uS2 family.

This is Small ribosomal subunit protein uS2 from Lysinibacillus sphaericus (strain C3-41).